Consider the following 591-residue polypeptide: MADKKNLRTPIVCVMGHVDHGKTTLLDKIRGTAIVSGEAGAITQHIGATEVPIDVIINKLGDPRLRDRFIVPGLLFIDTPGHHAFTTLRSRGGALADLAIVVVDINEGFKPQTYESLQILKRFKTPFVVVANKIDRIGGWVSQKDLPFAVTFKKQSEDVQARLETKLYEVIGELYNQGFAAERYDRVTNFQKTLGVVPVSAMTGEGIPDVLMVLLGLAQKFLEANLHYSAKGPGVGTVLEVKEEKGLGATLDVILYDGTLKKGDTVVIGSLGKPIQTKVRALLKPRELSEMRYESKFKQVNKVTAAVGVKISAPGLEGALAGSPIRVANEDTLDEIVDQIKSEIDEVRIDTGAVGIMIKADTLGSLEALVHEFQKDEVSIRKAEVGDISHRDAIEASTVEDPLYSVIIGFNVKVHPDARDFLQESTVKVFTSDVIYRLVEDYQKYVKEQQEQAEKRIFETIIRPGKFKILPGCIFRQSKPAVVGIRVLGGVVRTNADVMLENGNVVGKIKGLQIEGENIPSAGVGKEVAMAIEGATVGRQIKEEDVLYVNVPERHAKVLEHEIYDSLSTDEKETLDIFLSLKRKDNPFWAK.

The 217-residue stretch at 7 to 223 (LRTPIVCVMG…LLGLAQKFLE (217 aa)) folds into the tr-type G domain. Residues 16 to 23 (GHVDHGKT) form a G1 region. 16–23 (GHVDHGKT) is a binding site for GTP. Residues 41–45 (AITQH) are G2. Residues 78 to 81 (DTPG) are G3. GTP is bound by residues 78-82 (DTPGH) and 132-135 (NKID). Residues 132-135 (NKID) are G4. The G5 stretch occupies residues 200 to 202 (SAM).

Belongs to the TRAFAC class translation factor GTPase superfamily. Classic translation factor GTPase family. IF-2 subfamily.

In terms of biological role, function in general translation initiation by promoting the binding of the formylmethionine-tRNA to ribosomes. Seems to function along with eIF-2. This chain is Probable translation initiation factor IF-2, found in Methanosarcina barkeri (strain Fusaro / DSM 804).